Reading from the N-terminus, the 274-residue chain is Diaminopimelate epimerase (274 aa).

Residues Asn-11, Gln-44, and Asn-64 each coordinate substrate. Residue Cys-73 is the Proton donor of the active site. Substrate is bound by residues 74 to 75, Asn-157, Asn-190, and 208 to 209; these read GN and ER. The Proton acceptor role is filled by Cys-217. 218-219 provides a ligand contact to substrate; sequence GS.

This sequence belongs to the diaminopimelate epimerase family. In terms of assembly, homodimer.

It localises to the cytoplasm. The catalysed reaction is (2S,6S)-2,6-diaminopimelate = meso-2,6-diaminopimelate. Its pathway is amino-acid biosynthesis; L-lysine biosynthesis via DAP pathway; DL-2,6-diaminopimelate from LL-2,6-diaminopimelate: step 1/1. Its function is as follows. Catalyzes the stereoinversion of LL-2,6-diaminopimelate (L,L-DAP) to meso-diaminopimelate (meso-DAP), a precursor of L-lysine and an essential component of the bacterial peptidoglycan. This Haemophilus ducreyi (strain 35000HP / ATCC 700724) protein is Diaminopimelate epimerase.